Consider the following 132-residue polypeptide: D-ribose pyranase (132 aa).

His20 acts as the Proton donor in catalysis. Residues Asp28, His99, and 121 to 123 (YAN) contribute to the substrate site.

It belongs to the RbsD / FucU family. RbsD subfamily. Homodecamer.

It localises to the cytoplasm. It catalyses the reaction beta-D-ribopyranose = beta-D-ribofuranose. Its pathway is carbohydrate metabolism; D-ribose degradation; D-ribose 5-phosphate from beta-D-ribopyranose: step 1/2. Its function is as follows. Catalyzes the interconversion of beta-pyran and beta-furan forms of D-ribose. In Chromobacterium violaceum (strain ATCC 12472 / DSM 30191 / JCM 1249 / CCUG 213 / NBRC 12614 / NCIMB 9131 / NCTC 9757 / MK), this protein is D-ribose pyranase.